Reading from the N-terminus, the 41-residue chain is Large ribosomal subunit protein bL36 (41 aa).

This sequence belongs to the bacterial ribosomal protein bL36 family.

This is Large ribosomal subunit protein bL36 from Sinorhizobium fredii (strain NBRC 101917 / NGR234).